The primary structure comprises 249 residues: Sugar fermentation stimulation protein homolog (249 aa).

Belongs to the SfsA family.

This Synechococcus sp. (strain CC9902) protein is Sugar fermentation stimulation protein homolog.